The sequence spans 137 residues: uncharacterized protein (137 aa).

Over residues 1–10 (MISVDVPGHP) the composition is skewed to low complexity. Residues 1–23 (MISVDVPGHPGDAGGGGGGARKV) form a disordered region. The segment covering 11–20 (GDAGGGGGGA) has biased composition (gly residues).

This is an uncharacterized protein from Human adenovirus C serotype 2 (HAdV-2).